We begin with the raw amino-acid sequence, 301 residues long: UDP-3-O-acyl-N-acetylglucosamine deacetylase (301 aa).

The Zn(2+) site is built by histidine 81, histidine 237, and aspartate 241. Histidine 264 (proton donor) is an active-site residue.

Belongs to the LpxC family. Zn(2+) serves as cofactor.

It catalyses the reaction a UDP-3-O-[(3R)-3-hydroxyacyl]-N-acetyl-alpha-D-glucosamine + H2O = a UDP-3-O-[(3R)-3-hydroxyacyl]-alpha-D-glucosamine + acetate. The protein operates within glycolipid biosynthesis; lipid IV(A) biosynthesis; lipid IV(A) from (3R)-3-hydroxytetradecanoyl-[acyl-carrier-protein] and UDP-N-acetyl-alpha-D-glucosamine: step 2/6. In terms of biological role, catalyzes the hydrolysis of UDP-3-O-myristoyl-N-acetylglucosamine to form UDP-3-O-myristoylglucosamine and acetate, the committed step in lipid A biosynthesis. The chain is UDP-3-O-acyl-N-acetylglucosamine deacetylase from Leptospira borgpetersenii serovar Hardjo-bovis (strain JB197).